Consider the following 344-residue polypeptide: Methylthioribose-1-phosphate isomerase (344 aa).

Substrate-binding positions include 55–57 (RGA), R98, and Q202. The active-site Proton donor is the D243. Residue 253 to 254 (NK) coordinates substrate.

Belongs to the eIF-2B alpha/beta/delta subunits family. MtnA subfamily.

The enzyme catalyses 5-(methylsulfanyl)-alpha-D-ribose 1-phosphate = 5-(methylsulfanyl)-D-ribulose 1-phosphate. It participates in amino-acid biosynthesis; L-methionine biosynthesis via salvage pathway; L-methionine from S-methyl-5-thio-alpha-D-ribose 1-phosphate: step 1/6. Catalyzes the interconversion of methylthioribose-1-phosphate (MTR-1-P) into methylthioribulose-1-phosphate (MTRu-1-P). The sequence is that of Methylthioribose-1-phosphate isomerase from Gemmatimonas aurantiaca (strain DSM 14586 / JCM 11422 / NBRC 100505 / T-27).